We begin with the raw amino-acid sequence, 361 residues long: Spermatogenesis-associated protein 17 (361 aa).

IQ domains follow at residues 32–61, 55–84, and 91–120; these read ENDA…IVTI, LNRI…VAYY, and YNAM…LKEY.

It localises to the cytoplasm. The chain is Spermatogenesis-associated protein 17 (SPATA17) from Homo sapiens (Human).